A 628-amino-acid chain; its full sequence is Neutral/alkaline invertase 1, mitochondrial (628 aa).

A mitochondrion-targeting transit peptide spans 1–35 (MAAAAISHLRRGAPRHARALLYLSTRRFSSSSAAG). A compositionally biased stretch (low complexity) spans 79–90 (ASSAPPLESPPI). Residues 79–113 (ASSAPPLESPPIEELPDDATPPPEEEPGLPAPEKD) form a disordered region.

It belongs to the glycosyl hydrolase 100 family. In terms of tissue distribution, expressed in roots, leaf and stems.

The protein resides in the mitochondrion. It catalyses the reaction Hydrolysis of terminal non-reducing beta-D-fructofuranoside residues in beta-D-fructofuranosides.. Its function is as follows. Mitochondrial invertase that cleaves sucrose into glucose and fructose. This Oryza sativa subsp. japonica (Rice) protein is Neutral/alkaline invertase 1, mitochondrial.